We begin with the raw amino-acid sequence, 161 residues long: Urocortin-3 (161 aa).

Residues 1-21 (MLMPVHFLLLLLLLLGGPRTG) form the signal peptide. Residues 22 to 118 (LPHKFYKAKP…QDTAKSPHRT (97 aa)) constitute a propeptide that is removed on maturation. Positions 64 to 118 (SRDASSGEEEEGKEKKTFPISGARGGARGTRYRYVSQAQPRGKPRQDTAKSPHRT) are disordered. Position 157 is an isoleucine amide (I157).

Belongs to the sauvagine/corticotropin-releasing factor/urotensin I family. As to quaternary structure, binds with high affinity to CRF receptors 2-alpha and 2-beta.

It localises to the secreted. Suppresses food intake, delays gastric emptying and decreases heat-induced edema. Might represent an endogenous ligand for maintaining homeostasis after stress. This Homo sapiens (Human) protein is Urocortin-3 (UCN3).